The chain runs to 1135 residues: Nonribosomal peptide synthetase 9 (1135 aa).

Residues 23-77 are condensation 1; sequence TKQITTATYIKLAWAVVISCNTGSNDTVFGITVNGRGAPIDGAGEMTGATIATIP. Residues 177-562 form an adenylation region; the sequence is SYAELIRSAN…RRIDEIQEAT (386 aa). The disordered stretch occupies residues 485–507; the sequence is GPSPPVGRSSSNRAGSGRCAMGS. The segment covering 491 to 502 has biased composition (low complexity); that stretch reads GRSSSNRAGSGR. A Carrier domain is found at 672 to 748; the sequence is APSNRVEQDL…AIANKIGDVQ (77 aa). O-(pantetheine 4'-phosphoryl)serine is present on S709. The interval 746–999 is condensation 2; that stretch reads DVQRAAIKLV…TTLWPVVAQV (254 aa).

Belongs to the NRP synthetase family.

In terms of biological role, nonribosomal peptide synthesis (NRPS) is a key mechanism responsible for the biosynthesis of bioactive metabolites which are potentially contributing to organismal virulence. The protein is Nonribosomal peptide synthetase 9 (NRPS9) of Aspergillus fumigatus (strain ATCC MYA-4609 / CBS 101355 / FGSC A1100 / Af293) (Neosartorya fumigata).